The primary structure comprises 287 residues: Protease HtpX (287 aa).

2 helical membrane-spanning segments follow: residues 4-24 and 37-57; these read VLLF…VFNI and VGLL…SLWI. Zn(2+) is bound at residue H143. Residue E144 is part of the active site. H147 serves as a coordination point for Zn(2+). A run of 2 helical transmembrane segments spans residues 158 to 178 and 194 to 214; these read LIQG…ASAI and GVVM…VMWF. E219 provides a ligand contact to Zn(2+).

The protein belongs to the peptidase M48B family. Zn(2+) is required as a cofactor.

It is found in the cell inner membrane. This chain is Protease HtpX, found in Idiomarina loihiensis (strain ATCC BAA-735 / DSM 15497 / L2-TR).